The following is a 1616-amino-acid chain: Protein Shroom2 (1616 aa).

One can recognise a PDZ domain in the interval 26 to 108; it reads LVEVQLSGGA…TLKLVVKRRS (83 aa). Disordered stretches follow at residues 128-159 and 183-229; these read ELAASPFTSTSGCPSWSGRHHASSSSHDLSSS and HPSS…KADT. Low complexity predominate over residues 150–159; sequence SSSSHDLSSS. Polar residues-rich tracts occupy residues 186 to 197 and 220 to 229; these read SRLSVAKSNSSI and PDHTLSKADT. A Phosphoserine modification is found at serine 231. Residues 247–259 are compositionally biased toward low complexity; that stretch reads QGGRQAQAAGDPQ. Disordered regions lie at residues 247–475, 502–678, 695–790, 802–869, 881–1100, 1115–1184, 1268–1302, and 1363–1389; these read QGGR…SGWQ, GALE…PLAG, TSFK…SEDT, EETS…LPRR, KEQR…PSPA, PSVF…LTDK, AEPEAPHRAQPAEPQPLGTQVPPEKDRCTSPPGLS, and QRRKLLPKIPSPRSTEERKEEPSVPAA. The segment covering 312-321 has biased composition (pro residues); it reads SSPPPPPPPL. Phosphoserine occurs at positions 313 and 325. Positions 343–356 are enriched in low complexity; that stretch reads AAAAQHFTALAQAQ. Residues 358 to 370 show a composition bias toward basic and acidic residues; it reads RGDRRPELTDRPW. A compositionally biased stretch (low complexity) spans 405–415; sequence SSRLQASLSSS. Phosphoserine is present on serine 413. In terms of domain architecture, ASD1 spans 684–773; that stretch reads LKEAQARVLR…SEPEKMNEVG (90 aa). Basic and acidic residues-rich tracts occupy residues 754-770 and 821-830; these read FTAEQKLKSYSEPEKMN and IPRDKPERPR. A compositionally biased stretch (polar residues) spans 842-854; sequence WSRTTSLGDSLNA. 5 positions are modified to phosphoserine: serine 851, serine 897, serine 921, serine 922, and serine 924. Residue threonine 925 is modified to Phosphothreonine. The span at 926-958 shows a compositional bias: basic and acidic residues; the sequence is DHYKQEASVELRRQAGDPGEPREELPSAVRAEE. Position 974 is a phosphoserine (serine 974). Positions 975–994 are enriched in polar residues; the sequence is PGSQQHPPSQKAPNPPTFSE. Residues serine 1036 and serine 1039 each carry the phosphoserine modification. A compositionally biased stretch (basic and acidic residues) spans 1068-1077; that stretch reads PKREPRRYRA. Residues 1159 to 1176 are compositionally biased toward polar residues; it reads LRLQTATMETSRSPSPQF. Serine 1171, serine 1173, and serine 1297 each carry phosphoserine. Residues 1317-1611 form the ASD2 domain; sequence EELAREIVGK…QLKCLLDSLQ (295 aa).

The protein belongs to the shroom family. In terms of assembly, interacts with F-actin. As to expression, abundant in retina and melanoma; also in brain, placenta, lung, kidney and pancreas.

The protein resides in the apical cell membrane. It localises to the cell junction. The protein localises to the tight junction. It is found in the cytoplasm. Its subcellular location is the cytoskeleton. Functionally, may be involved in endothelial cell morphology changes during cell spreading. In the retinal pigment epithelium, may regulate the biogenesis of melanosomes and promote their association with the apical cell surface by inducing gamma-tubulin redistribution. The chain is Protein Shroom2 (SHROOM2) from Homo sapiens (Human).